The sequence spans 219 residues: MPVKWLLHWQPNQGSTFSSQILNEVTQSIESLNGVKEGTWKATLNYYKPMLQDQANQAEFPREFVGISLPEEPDKYYFVIRSQRIVVEADSSIQMIMESLQSYKCKLSFYFEGLEYQLGDFRLRVGKVVPTHAETIRGVVMEVEYLPISSMGMAKKLMEEFLEIWQEAMSKRSLPGKFVNKELNFEKFGLGDNYTPQHTAVGYAFFMANLMAAIQAGRG.

Belongs to the Mediator complex subunit 20 family. Component of the Mediator complex.

It localises to the nucleus. In terms of biological role, component of the Mediator complex, a coactivator involved in the regulated transcription of nearly all RNA polymerase II-dependent genes. Mediator functions as a bridge to convey information from gene-specific regulatory proteins to the basal RNA polymerase II transcription machinery. The Mediator complex, having a compact conformation in its free form, is recruited to promoters by direct interactions with regulatory proteins and serves for the assembly of a functional preinitiation complex with RNA polymerase II and the general transcription factors. This chain is Mediator of RNA polymerase II transcription subunit 20b (MED20B), found in Arabidopsis thaliana (Mouse-ear cress).